The primary structure comprises 195 residues: Interferon omega-2 (195 aa).

Positions 1–23 (MALLPSLLTALVVYELWPCGALG) are cleaved as a signal peptide. Cystine bridges form between C24/C122 and C52/C162. The N-linked (GlcNAc...) asparagine glycan is linked to N101.

Belongs to the alpha/beta interferon family.

The protein resides in the secreted. The protein is Interferon omega-2 of Equus caballus (Horse).